A 276-amino-acid polypeptide reads, in one-letter code: Homeobox-leucine zipper protein HOX22 (276 aa).

A DNA-binding region (homeobox) is located at residues 70–130 (AGERKRRFTE…NKRARWRSKQ (61 aa)). Positions 129–173 (KQLEHDYAALRSKYDALHSRVESLKQEKLALTVQLHELRERLRER) are leucine-zipper. The interval 170-212 (LREREERSGNGGAATTAASSSSCNGSGSEEVDDDDDKRNAAAG) is disordered. Positions 182–197 (AATTAASSSSCNGSGS) are enriched in low complexity.

Belongs to the HD-ZIP homeobox family. Class I subfamily. As to expression, expressed in seedlings, roots, stems, leaf sheaths and blades and panicles.

Its subcellular location is the nucleus. Its function is as follows. Probable transcription factor. This is Homeobox-leucine zipper protein HOX22 (HOX22) from Oryza sativa subsp. japonica (Rice).